The following is a 102-amino-acid chain: Small ribosomal subunit protein uS10 (102 aa).

It belongs to the universal ribosomal protein uS10 family. In terms of assembly, part of the 30S ribosomal subunit.

In terms of biological role, involved in the binding of tRNA to the ribosomes. This chain is Small ribosomal subunit protein uS10, found in Carboxydothermus hydrogenoformans (strain ATCC BAA-161 / DSM 6008 / Z-2901).